The chain runs to 131 residues: Profilin-1 (131 aa).

It belongs to the profilin family. As to quaternary structure, occurs in many kinds of cells as a complex with monomeric actin in a 1:1 ratio.

Its subcellular location is the cytoplasm. It is found in the cytoskeleton. In terms of biological role, binds to actin and affects the structure of the cytoskeleton. At high concentrations, profilin prevents the polymerization of actin, whereas it enhances it at low concentrations. By binding to PIP2, it inhibits the formation of IP3 and DG. The polypeptide is Profilin-1 (PRO1) (Triticum aestivum (Wheat)).